The primary structure comprises 31 residues: Cytochrome b6-f complex subunit 6 (31 aa).

Residues 4–24 (ITSYFGFLLVALTITSALFIG) traverse the membrane as a helical segment.

The protein belongs to the PetL family. In terms of assembly, the 4 large subunits of the cytochrome b6-f complex are cytochrome b6, subunit IV (17 kDa polypeptide, PetD), cytochrome f and the Rieske protein, while the 4 small subunits are PetG, PetL, PetM and PetN. The complex functions as a dimer.

It is found in the plastid. Its subcellular location is the chloroplast thylakoid membrane. Functionally, component of the cytochrome b6-f complex, which mediates electron transfer between photosystem II (PSII) and photosystem I (PSI), cyclic electron flow around PSI, and state transitions. PetL is important for photoautotrophic growth as well as for electron transfer efficiency and stability of the cytochrome b6-f complex. This chain is Cytochrome b6-f complex subunit 6, found in Pelargonium hortorum (Common geranium).